Here is a 409-residue protein sequence, read N- to C-terminus: Phosphoserine phosphatase SerB2 (409 aa).

ACT domains are found at residues 8 to 86 (LITV…RSDD) and 102 to 174 (GRPI…DYGL). The Nucleophile role is filled by Asp185. Residues Asp185 and Asp187 each coordinate Mg(2+). Residue Asp187 is the Proton donor of the active site. Substrate is bound by residues Glu194, Arg230, 273–274 (SG), and Lys318. Position 341 (Asp341) interacts with Mg(2+). Asn344 provides a ligand contact to substrate.

This sequence belongs to the HAD-like hydrolase superfamily. SerB family. Homodimer. The dimeric population shifts to a tetramer in the presence of L-serine, which inactivates the enzyme. Mg(2+) is required as a cofactor. Mn(2+) serves as cofactor.

The protein localises to the secreted. It localises to the host cytoplasm. Its subcellular location is the host cytosol. The enzyme catalyses O-phospho-L-serine + H2O = L-serine + phosphate. The catalysed reaction is O-phospho-D-serine + H2O = D-serine + phosphate. It carries out the reaction O-phospho-L-seryl-[protein] + H2O = L-seryl-[protein] + phosphate. It catalyses the reaction O-phospho-L-threonyl-[protein] + H2O = L-threonyl-[protein] + phosphate. It functions in the pathway amino-acid biosynthesis; L-serine biosynthesis; L-serine from 3-phospho-D-glycerate: step 3/3. Clofazimine, a drug being evaluated for XDR and MDR tuberculosis, inhibits SerB2 phosphatase activity and reverses the various functional effects described above and interactions with host proteins. Is inhibited by known PSP inhibitors such as chlorpromazine, DL-AP3 and sodium orthovanadate, but not by okadaic acid. By binding to the ACT domains, amino-acids have various effects on enzyme activity: L-serine and L-glycine act as inhibitors, whereas L-lysine, L-tyrosine and L-phenylalanine are activators. High throughput screen has been performed to identify specific PSP inhibitors with activity against intracellular bacteria; the two best hits identified in this screen, clorobiocin and rosaniline, are bactericidal and kill bacteria in infected macrophages in a dose-dependent manner. In terms of biological role, catalyzes the dephosphorylation of O-phospho-L-serine into L-serine, a step in the L-serine biosynthetic pathway. Exhibits high specificity for L-phosphoserine compared to substrates like L-phosphothreonine (5% relative activity) and L-phosphotyrosine (1.7% relative activity). Functionally, in the host, induces significant cytoskeleton rearrangements through cofilin dephosphorylation and its subsequent activation, and affects the expression of genes that regulate actin dynamics. It specifically interacts with HSP90, HSP70 and HSP27 that block apoptotic pathways but not with other HSPs. Also interacts with GAPDH. It actively dephosphorylates MAP kinase p38 and NF-kappa B p65 (specifically at Ser-536) that play crucial roles in inflammatory and immune responses. This in turn leads to down-regulation of Interleukin 8, a chemotactic and inflammatory cytokine. Thus might help the pathogen to evade the host's immune response. Exogenous addition of purified SerB2 protein to human THP-1 cells (that can be differentiated into macrophage-like cells) induces microtubule rearrangements; the phosphatase activity is co-related to the elicited rearrangements, while addition of the ACT-domains alone elicits no rearrangements. The sequence is that of Phosphoserine phosphatase SerB2 from Mycobacterium tuberculosis (strain ATCC 25618 / H37Rv).